We begin with the raw amino-acid sequence, 390 residues long: RNA binding protein fox-1 homolog 2 (390 aa).

The disordered stretch occupies residues 1-127 (MQNEPLTPGY…STPKRLHVSN (127 aa)). Composition is skewed to polar residues over residues 18–28 (SQGNQEPTTTP) and 65–95 (GEHN…SLTT). Phosphothreonine is present on His67. Residues 97-117 (GGAQTDGQQSQTQSSENSESK) show a composition bias toward low complexity. One can recognise an RRM domain in the interval 121–197 (KRLHVSNIPF…RKIEVNNATA (77 aa)). An omega-N-methylarginine mark is found at Gly249, Gly267, Phe268, Ala277, and Arg281. Asymmetric dimethylarginine is present on residues Arg297 and Arg329. 2 positions are modified to asymmetric dimethylarginine; alternate: Arg381 and Arg386. Residues Arg381 and Arg386 each carry the omega-N-methylarginine; alternate modification.

In terms of assembly, interacts with ER-alpha N-terminal activation domain. Interacts with RBPMS; the interaction allows cooperative assembly of stable cell-specific alternative splicing regulatory complexes.

It is found in the nucleus. Its subcellular location is the cytoplasm. RNA-binding protein that regulates alternative splicing events by binding to 5'-UGCAUGU-3' elements. Prevents binding of U2AF2 to the 3'-splice site. Regulates alternative splicing of tissue-specific exons and of differentially spliced exons during erythropoiesis. RNA-binding protein that seems to act as a coregulatory factor of ER-alpha. Together with RNA binding proteins RBPMS and MBNL1/2, activates vascular smooth muscle cells alternative splicing events. The chain is RNA binding protein fox-1 homolog 2 (RBFOX2) from Homo sapiens (Human).